Here is a 64-residue protein sequence, read N- to C-terminus: Large ribosomal subunit protein bL35 (64 aa).

Residues 1-20 (MKQKTHKGTAKRIKVTGSGK) form a disordered region.

This sequence belongs to the bacterial ribosomal protein bL35 family.

This is Large ribosomal subunit protein bL35 from Corynebacterium urealyticum (strain ATCC 43042 / DSM 7109).